Reading from the N-terminus, the 649-residue chain is Acetyl-coenzyme A synthetase (649 aa).

CoA is bound by residues 189-192 (RGGK), Thr-311, and Asn-335. ATP contacts are provided by residues 387–389 (GEP), 411–416 (DTWWQT), Asp-500, and Arg-515. CoA is bound at residue Ser-523. Residue Arg-526 coordinates ATP. Val-537, His-539, and Val-542 together coordinate Mg(2+). Arg-584 is a binding site for CoA. At Lys-609 the chain carries N6-acetyllysine.

This sequence belongs to the ATP-dependent AMP-binding enzyme family. It depends on Mg(2+) as a cofactor. Acetylated. Deacetylation by the SIR2-homolog deacetylase activates the enzyme.

It catalyses the reaction acetate + ATP + CoA = acetyl-CoA + AMP + diphosphate. Catalyzes the conversion of acetate into acetyl-CoA (AcCoA), an essential intermediate at the junction of anabolic and catabolic pathways. AcsA undergoes a two-step reaction. In the first half reaction, AcsA combines acetate with ATP to form acetyl-adenylate (AcAMP) intermediate. In the second half reaction, it can then transfer the acetyl group from AcAMP to the sulfhydryl group of CoA, forming the product AcCoA. The protein is Acetyl-coenzyme A synthetase of Rhizobium meliloti (strain 1021) (Ensifer meliloti).